The following is a 225-amino-acid chain: Ribonuclease 3 (225 aa).

Residues 4–133 (FEKLETLLGY…LIAAIYLDSN (130 aa)) form the RNase III domain. Glu46 provides a ligand contact to Mg(2+). The active site involves Asp50. Positions 119 and 122 each coordinate Mg(2+). Glu122 is a catalytic residue. Residues 158–225 (DPKTALQEWA…AARSLLHRLK (68 aa)) form the DRBM domain.

This sequence belongs to the ribonuclease III family. Homodimer. Mg(2+) is required as a cofactor.

The protein localises to the cytoplasm. It carries out the reaction Endonucleolytic cleavage to 5'-phosphomonoester.. In terms of biological role, digests double-stranded RNA. Involved in the processing of primary rRNA transcript to yield the immediate precursors to the large and small rRNAs (23S and 16S). Processes some mRNAs, and tRNAs when they are encoded in the rRNA operon. Processes pre-crRNA and tracrRNA of type II CRISPR loci if present in the organism. This chain is Ribonuclease 3, found in Rickettsia prowazekii (strain Madrid E).